We begin with the raw amino-acid sequence, 289 residues long: Acetyl-coenzyme A carboxylase carboxyl transferase subunit beta (289 aa).

The region spanning 24 to 289 (LWIKCPESGE…NSPRRAPIPA (266 aa)) is the CoA carboxyltransferase N-terminal domain.

It belongs to the AccD/PCCB family. As to quaternary structure, acetyl-CoA carboxylase is a heterohexamer composed of biotin carboxyl carrier protein (AccB), biotin carboxylase (AccC) and two subunits each of ACCase subunit alpha (AccA) and ACCase subunit beta (AccD).

Its subcellular location is the cytoplasm. It carries out the reaction N(6)-carboxybiotinyl-L-lysyl-[protein] + acetyl-CoA = N(6)-biotinyl-L-lysyl-[protein] + malonyl-CoA. Its pathway is lipid metabolism; malonyl-CoA biosynthesis; malonyl-CoA from acetyl-CoA: step 1/1. Component of the acetyl coenzyme A carboxylase (ACC) complex. Biotin carboxylase (BC) catalyzes the carboxylation of biotin on its carrier protein (BCCP) and then the CO(2) group is transferred by the transcarboxylase to acetyl-CoA to form malonyl-CoA. In Beijerinckia indica subsp. indica (strain ATCC 9039 / DSM 1715 / NCIMB 8712), this protein is Acetyl-coenzyme A carboxylase carboxyl transferase subunit beta.